Consider the following 308-residue polypeptide: Homoserine O-succinyltransferase (308 aa).

Catalysis depends on Cys142, which acts as the Acyl-thioester intermediate. Residues Lys163 and Ser192 each contribute to the substrate site. Residue His235 is the Proton acceptor of the active site. The active site involves Glu237. Substrate is bound at residue Arg249.

Belongs to the MetA family.

The protein localises to the cytoplasm. The enzyme catalyses L-homoserine + succinyl-CoA = O-succinyl-L-homoserine + CoA. The protein operates within amino-acid biosynthesis; L-methionine biosynthesis via de novo pathway; O-succinyl-L-homoserine from L-homoserine: step 1/1. Its function is as follows. Transfers a succinyl group from succinyl-CoA to L-homoserine, forming succinyl-L-homoserine. The protein is Homoserine O-succinyltransferase of Pseudoalteromonas atlantica (strain T6c / ATCC BAA-1087).